The following is a 44-amino-acid chain: Photosystem I reaction center subunit IX (44 aa).

Residues 7 to 27 (YLSVAPVISTLWFGSLAGLLI) form a helical membrane-spanning segment.

The protein belongs to the PsaJ family.

It is found in the plastid. The protein resides in the chloroplast thylakoid membrane. Functionally, may help in the organization of the PsaE and PsaF subunits. This is Photosystem I reaction center subunit IX from Ceratophyllum demersum (Rigid hornwort).